Here is a 419-residue protein sequence, read N- to C-terminus: MDVDNGEGQVQVHLKTKQEHYAVPDVPYAIDGTVTTAELNTFVNALLLSKGSSAVDFDFLVFDEYLRGRLCDHLREKAISFEDAIEIEYVERFPAPEPQDCLLHDDWVSAVKASGKWILTGCYDNTLNIWTNKGKHILTIPGHTAPIKAVDWISLDDDTGRFVSSSQDQTAMLWQWNVGANTVECVSVCKGHERGVDSVSVSPDGQRFATGSWDTMLKVWSAELEDAGEGTSKRMKESGVRTPKITLQGHRESISAVQWMDASTLLTGSWDHTLKVWDLSLEGIKAEISTNKSIFDASYSKLNHLILTASADKNLRLYDSRTNQGSVVRNTYLGHNAWVQTVMWSTTEEFLFVSGSYDNQNKLWDCRSPKAPLYDLLGHGEKVLDIDWSNPKYIVSGGSDNTVRVFKSRKALVENMDTK.

The interval 10–91 is ubiquitin-like (UBL) domain; the sequence is VQVHLKTKQE…EDAIEIEYVE (82 aa). WD repeat units follow at residues 103–141, 142–184, 191–230, 249–287, 289–328, 334–374, and 378–416; these read LHDD…LTIP, GHTA…NTVE, GHER…AGEG, GHRE…IKAE, STNK…GSVV, GHNA…APLY, and GHGE…VENM.

This sequence belongs to the WD repeat WDR12/YTM1 family.

It is found in the nucleus. The protein resides in the nucleolus. The protein localises to the nucleoplasm. In terms of biological role, required for maturation of ribosomal RNAs and formation of the large ribosomal subunit. The polypeptide is Ribosome biogenesis protein WDR12 homolog (Drosophila pseudoobscura pseudoobscura (Fruit fly)).